Reading from the N-terminus, the 400-residue chain is Unsaturated glucuronyl hydrolase (400 aa).

Residues 1 to 20 (MRKLVYLVLVLGLTFLNVRC) form the signal peptide. D120 serves as the catalytic Nucleophile. The Proton donor role is filled by D181.

This sequence belongs to the glycosyl hydrolase 88 family.

It is found in the cell surface. Its function is as follows. Unsaturated glucuronyl hydrolase involved in ulvan degradation. Ulvan is the main polysaccharide component of the Ulvales (green seaweed) cell wall. It is composed of disaccharide building blocks comprising 3-sulfated rhamnose (Rha3S) linked to D-glucuronic acid (GlcA), L-iduronic acid (IduA), or D-xylose (Xyl). Unsaturated glucuronyl hydrolase catalyzes the cleavage of the unsaturated 4-deoxy-L-threo-hex-4-enopyranosiduronic acid (deltaUA) at the non-reducing end of ulvan oligomers, thus forming 5-dehydro-4-deoxy-D-glucuronate. This Formosa agariphila (strain DSM 15362 / KCTC 12365 / LMG 23005 / KMM 3901 / M-2Alg 35-1) protein is Unsaturated glucuronyl hydrolase.